We begin with the raw amino-acid sequence, 635 residues long: Threonine--tRNA ligase (635 aa).

The tract at residues 1–144 is editing domain; sequence MQLLLIHSDY…RTIRLEGAVP (144 aa). The tract at residues 215-514 is catalytic; that stretch reads PHVELMRRLE…AEEGKVPNLP (300 aa). The Zn(2+) site is built by Cys-307, His-359, and His-483.

This sequence belongs to the class-II aminoacyl-tRNA synthetase family. In terms of assembly, homodimer. It depends on Zn(2+) as a cofactor.

It localises to the cytoplasm. The enzyme catalyses tRNA(Thr) + L-threonine + ATP = L-threonyl-tRNA(Thr) + AMP + diphosphate + H(+). Catalyzes the attachment of threonine to tRNA(Thr) in a two-step reaction: L-threonine is first activated by ATP to form Thr-AMP and then transferred to the acceptor end of tRNA(Thr). Also edits incorrectly charged L-seryl-tRNA(Thr). The sequence is that of Threonine--tRNA ligase from Methanococcoides burtonii (strain DSM 6242 / NBRC 107633 / OCM 468 / ACE-M).